A 490-amino-acid chain; its full sequence is Tandem C2 domains nuclear protein (490 aa).

A phosphoserine mark is found at serine 83, serine 156, serine 168, serine 174, and serine 211. The segment at 189–215 is disordered; that stretch reads HDSLSSVPSSSSSRKNSQGSNRSLDTI. Low complexity predominate over residues 192–211; sequence LSSVPSSSSSRKNSQGSNRS. 2 positions are modified to phosphothreonine: threonine 214 and threonine 216. Phosphoserine is present on serine 218. C2 domains follow at residues 223–342 and 344–471; these read DFGR…SLDI and PPSK…NQWK. Positions 447 to 449 match the Nuclear localization signal motif; the sequence is RRK.

It localises to the nucleus. The chain is Tandem C2 domains nuclear protein (TC2N) from Homo sapiens (Human).